Here is a 356-residue protein sequence, read N- to C-terminus: tRNA N6-adenosine threonylcarbamoyltransferase (356 aa).

Fe cation is bound by residues histidine 110 and histidine 114. Residues 132–136, aspartate 165, glycine 178, aspartate 182, and asparagine 288 each bind substrate; that span reads LVSGG. Aspartate 316 is a binding site for Fe cation.

Belongs to the KAE1 / TsaD family. Fe(2+) is required as a cofactor.

It is found in the cytoplasm. The catalysed reaction is L-threonylcarbamoyladenylate + adenosine(37) in tRNA = N(6)-L-threonylcarbamoyladenosine(37) in tRNA + AMP + H(+). Required for the formation of a threonylcarbamoyl group on adenosine at position 37 (t(6)A37) in tRNAs that read codons beginning with adenine. Is involved in the transfer of the threonylcarbamoyl moiety of threonylcarbamoyl-AMP (TC-AMP) to the N6 group of A37, together with TsaE and TsaB. TsaD likely plays a direct catalytic role in this reaction. This Maridesulfovibrio salexigens (strain ATCC 14822 / DSM 2638 / NCIMB 8403 / VKM B-1763) (Desulfovibrio salexigens) protein is tRNA N6-adenosine threonylcarbamoyltransferase.